Consider the following 235-residue polypeptide: Regulator of G-protein signaling 18 (235 aa).

Phosphoserine is present on Ser49. In terms of domain architecture, RGS spans 86-202; it reads SFDKLLSHRD…LKSETYLHLI (117 aa). Phosphoserine is present on residues Ser216 and Ser218.

As to expression, expressed in bone marrow, spleen, fetal liver and lung. At very low levels expressed in heart.

Its subcellular location is the cytoplasm. Its function is as follows. Inhibits signal transduction by increasing the GTPase activity of G protein alpha subunits thereby driving them into their inactive GDP-bound form. Binds to G(i) alpha-1, G(i) alpha-2, G(i) alpha-3 and G(q) alpha. The protein is Regulator of G-protein signaling 18 (Rgs18) of Mus musculus (Mouse).